The sequence spans 123 residues: UPF0231 protein plu3616 (123 aa).

It belongs to the UPF0231 family.

This Photorhabdus laumondii subsp. laumondii (strain DSM 15139 / CIP 105565 / TT01) (Photorhabdus luminescens subsp. laumondii) protein is UPF0231 protein plu3616.